A 563-amino-acid polypeptide reads, in one-letter code: Chitinase A (563 aa).

An N-terminal signal peptide occupies residues methionine 1 to alanine 23. The GH18 domain maps to lysine 158–serine 559. Catalysis depends on glutamate 315, which acts as the Proton donor.

This sequence belongs to the glycosyl hydrolase 18 family. Chitinase class II subfamily.

The catalysed reaction is Random endo-hydrolysis of N-acetyl-beta-D-glucosaminide (1-&gt;4)-beta-linkages in chitin and chitodextrins.. This is Chitinase A (chiA) from Serratia marcescens.